Here is a 345-residue protein sequence, read N- to C-terminus: NADH-ubiquinone oxidoreductase chain 2 (345 aa).

10 helical membrane-spanning segments follow: residues methionine 1–threonine 21, tryptophan 26–methionine 46, phenylalanine 60–leucine 80, isoleucine 96–leucine 115, valine 122–methionine 144, leucine 148–leucine 170, threonine 201–methionine 223, serine 242–proline 262, asparagine 274–leucine 294, and threonine 323–leucine 343.

This sequence belongs to the complex I subunit 2 family.

Its subcellular location is the mitochondrion inner membrane. The catalysed reaction is a ubiquinone + NADH + 5 H(+)(in) = a ubiquinol + NAD(+) + 4 H(+)(out). Functionally, core subunit of the mitochondrial membrane respiratory chain NADH dehydrogenase (Complex I) that is believed to belong to the minimal assembly required for catalysis. Complex I functions in the transfer of electrons from NADH to the respiratory chain. The immediate electron acceptor for the enzyme is believed to be ubiquinone. In Varanus nebulosus (Clouded monitor), this protein is NADH-ubiquinone oxidoreductase chain 2 (MT-ND2).